A 405-amino-acid polypeptide reads, in one-letter code: Elongation factor Tu (405 aa).

A tr-type G domain is found at 10–213 (KEHVNVGTIG…AMDEYIPTPQ (204 aa)). The interval 19-26 (GHVDHGKS) is G1. 19–26 (GHVDHGKS) is a binding site for GTP. Residue Ser-26 coordinates Mg(2+). The segment at 64 to 68 (GITIN) is G2. Residues 85-88 (DCPG) are G3. Residues 85 to 89 (DCPGH) and 140 to 143 (NKCD) each bind GTP. Positions 140–143 (NKCD) are G4. A G5 region spans residues 178–180 (SAL).

The protein belongs to the TRAFAC class translation factor GTPase superfamily. Classic translation factor GTPase family. EF-Tu/EF-1A subfamily. In terms of assembly, monomer.

Its subcellular location is the cytoplasm. It carries out the reaction GTP + H2O = GDP + phosphate + H(+). Its function is as follows. GTP hydrolase that promotes the GTP-dependent binding of aminoacyl-tRNA to the A-site of ribosomes during protein biosynthesis. This is Elongation factor Tu from Aquifex aeolicus (strain VF5).